A 272-amino-acid polypeptide reads, in one-letter code: MTSQQAHAIPDVQNLNDSRKLAIDKVGIKSIRHPVRVSDKNGGVQHTIAVFNMYVGLPHNFKGTHMSRFIEIINGNEREISVESIEPMLREMVKRLEAETGQIELTFPYFINKSAPISGVQSLMDYEVTFTAEIREGGAYTFTMKTVVPVTSLCPCSKKISEYGAHNQRSHVTVTAQTNSFLWIEELVQLVESQASCQLYGLLKRPDEKYVTEHAYDNPKFVEDMVRDVAGLLNAEARIDCYRVESENFESIHNHSAYALIECDKRLVVGAN.

This sequence belongs to the GTP cyclohydrolase IV family.

The catalysed reaction is GTP + H2O = 7,8-dihydroneopterin 3'-triphosphate + formate + H(+). Its pathway is cofactor biosynthesis; 7,8-dihydroneopterin triphosphate biosynthesis; 7,8-dihydroneopterin triphosphate from GTP: step 1/1. Converts GTP to 7,8-dihydroneopterin triphosphate. The protein is GTP cyclohydrolase FolE2 of Aromatoleum aromaticum (strain DSM 19018 / LMG 30748 / EbN1) (Azoarcus sp. (strain EbN1)).